The following is a 690-amino-acid chain: Eukaryotic translation initiation factor 3 subunit B (690 aa).

A compositionally biased stretch (basic and acidic residues) spans 1 to 11 (MAKKKSEEHSG). The interval 1–36 (MAKKKSEEHSGADANDSDYQEEPNFEDPPGFVDNIS) is disordered. Residues 15–25 (NDSDYQEEPNF) are compositionally biased toward acidic residues. The RRM domain maps to 57–141 (SVVVVDNIPK…HTFAVNLFTD (85 aa)). WD repeat units follow at residues 207–246 (TRERFTDTFVKWSPLGTYVVTFHKPGVAIWGGSSFQKIQK), 293–331 (DGMSVLSMFRWSHDDKFVARMGENSIHIYETPSFFLLDL), 334–369 (IKIPGIRGFSWSPTDNVIAYWVEEQNQIPARVTLME), 442–484 (EIRE…KPSL), and 530–575 (PDHF…IKRT). Positions 595-645 (EEKQKEIKKNLKKYYAAFEQKDRLRLTRASKELLEKRSQLRETFMEYRNKR) form a coiled coil.

Belongs to the eIF-3 subunit B family. Component of the eukaryotic translation initiation factor 3 (eIF-3) complex. The eIF-3 complex interacts with pix. Interacts with mxt.

It is found in the cytoplasm. In terms of biological role, RNA-binding component of the eukaryotic translation initiation factor 3 (eIF-3) complex, which is involved in protein synthesis of a specialized repertoire of mRNAs and, together with other initiation factors, stimulates binding of mRNA and methionyl-tRNAi to the 40S ribosome. The eIF-3 complex specifically targets and initiates translation of a subset of mRNAs involved in cell proliferation. This chain is Eukaryotic translation initiation factor 3 subunit B, found in Drosophila erecta (Fruit fly).